A 307-amino-acid polypeptide reads, in one-letter code: Ventral anterior homeobox 2 (307 aa).

3 disordered regions span residues 1–70 (MFDQ…DKLL), 155–175 (RTKQKKDQTKDTDKRSSSTSE), and 197–254 (PPPN…PSPR). Residues 25–38 (CRDRGRESKSRTEV) are compositionally biased toward basic and acidic residues. A compositionally biased stretch (low complexity) spans 46 to 62 (SSTDTPGTSASTPTSSS). The homeobox DNA-binding region spans 103-162 (PKRTRTSFTAEQLYRLELEFQRCQYVVGRERTELARQLNLSETQVKVWFQNRRTKQKKDQ). The segment covering 159-170 (KKDQTKDTDKRS) has biased composition (basic and acidic residues). Residues 202 to 249 (LLAHPHPGNGSLLGSPSVSTSSGVSSSTTPPGAGSGTFGLSLSSLSGT) show a composition bias toward low complexity.

The protein belongs to the EMX homeobox family. In terms of tissue distribution, expressed in the anterior neural keel and later in the preoptic area, optic stalk and ventral retina.

The protein resides in the nucleus. In terms of biological role, transcription factor that may function in dorsoventral specification of the forebrain. Required for closure of the choroid fissure and together with vax1 is required for optic nerve differentiation and to limit retinal development to the optic cup. This is Ventral anterior homeobox 2 (vax2) from Danio rerio (Zebrafish).